Reading from the N-terminus, the 321-residue chain is Cytoskeleton protein RodZ (321 aa).

Residues 1–111 lie on the Cytoplasmic side of the membrane; it reads MNTEATHDQN…LGKRRKKRDG (111 aa). The 53-residue stretch at 19 to 71 folds into the HTH cro/C1-type domain; that stretch reads LRNAREQLGLSQQAVAERLCLKVSTVRDIEEDKAPSDLASTFLRGYIRSYARL. The H-T-H motif DNA-binding region spans 30–49; it reads QQAVAERLCLKVSTVRDIEE. The chain crosses the membrane as a helical; Signal-anchor for type II membrane protein span at residues 112-132; it reads WLMSFTWLVLFVVVGLTGAWW. Topologically, residues 133-321 are periplasmic; it reads WQNHKAQQEE…TINAEPTSAQ (189 aa). The tract at residues 167–190 is disordered; sequence DTRAAASQDTTPAETAPAAPVDST. Low complexity predominate over residues 176–190; sequence TTPAETAPAAPVDST.

Belongs to the RodZ family.

Its subcellular location is the cell inner membrane. In terms of biological role, cytoskeletal protein that is involved in cell-shape control through regulation of the length of the long axis. This Salmonella arizonae (strain ATCC BAA-731 / CDC346-86 / RSK2980) protein is Cytoskeleton protein RodZ.